Consider the following 90-residue polypeptide: DNA-directed RNA polymerase subunit omega (90 aa).

The tract at residues 69-90 (RQEQQEQDAAELAAVSSITHNR) is disordered.

Belongs to the RNA polymerase subunit omega family. The RNAP catalytic core consists of 2 alpha, 1 beta, 1 beta' and 1 omega subunit. When a sigma factor is associated with the core the holoenzyme is formed, which can initiate transcription.

The catalysed reaction is RNA(n) + a ribonucleoside 5'-triphosphate = RNA(n+1) + diphosphate. In terms of biological role, promotes RNA polymerase assembly. Latches the N- and C-terminal regions of the beta' subunit thereby facilitating its interaction with the beta and alpha subunits. The protein is DNA-directed RNA polymerase subunit omega of Aliivibrio salmonicida (strain LFI1238) (Vibrio salmonicida (strain LFI1238)).